Here is a 390-residue protein sequence, read N- to C-terminus: Malonyl-CoA-acyl carrier protein transacylase, mitochondrial (390 aa).

Residues 1–21 (MSVRVARVAWVRGLGASYRRG) constitute a mitochondrion transit peptide. Residues serine 153 and histidine 270 contribute to the active site. An N6-succinyllysine modification is found at lysine 314.

It belongs to the type II malonyltransferase family.

It is found in the mitochondrion. The enzyme catalyses holo-[ACP] + malonyl-CoA = malonyl-[ACP] + CoA. It functions in the pathway lipid metabolism; fatty acid biosynthesis. Functionally, catalyzes the transfer of a malonyl moiety from malonyl-CoA to the free thiol group of the phosphopantetheine arm of the mitochondrial ACP protein (NDUFAB1). This suggests the existence of the biosynthesis of fatty acids in mitochondria. Also acts as a mitochondrial small ribosomal subunit (mt-SSU) assembly factor. This is Malonyl-CoA-acyl carrier protein transacylase, mitochondrial from Homo sapiens (Human).